We begin with the raw amino-acid sequence, 385 residues long: Probable tRNA sulfurtransferase (385 aa).

The region spanning 65–165 (AILQELFSFL…KEHFLVFTER (101 aa)) is the THUMP domain. Residues 183-184 (LL), 208-209 (TF), arginine 267, glycine 285, and glutamine 294 each bind ATP.

Belongs to the ThiI family.

It localises to the cytoplasm. The catalysed reaction is [ThiI sulfur-carrier protein]-S-sulfanyl-L-cysteine + a uridine in tRNA + 2 reduced [2Fe-2S]-[ferredoxin] + ATP + H(+) = [ThiI sulfur-carrier protein]-L-cysteine + a 4-thiouridine in tRNA + 2 oxidized [2Fe-2S]-[ferredoxin] + AMP + diphosphate. It catalyses the reaction [ThiS sulfur-carrier protein]-C-terminal Gly-Gly-AMP + S-sulfanyl-L-cysteinyl-[cysteine desulfurase] + AH2 = [ThiS sulfur-carrier protein]-C-terminal-Gly-aminoethanethioate + L-cysteinyl-[cysteine desulfurase] + A + AMP + 2 H(+). Its pathway is cofactor biosynthesis; thiamine diphosphate biosynthesis. Functionally, catalyzes the ATP-dependent transfer of a sulfur to tRNA to produce 4-thiouridine in position 8 of tRNAs, which functions as a near-UV photosensor. Also catalyzes the transfer of sulfur to the sulfur carrier protein ThiS, forming ThiS-thiocarboxylate. This is a step in the synthesis of thiazole, in the thiamine biosynthesis pathway. The sulfur is donated as persulfide by IscS. This Mycoplasma genitalium (strain ATCC 33530 / DSM 19775 / NCTC 10195 / G37) (Mycoplasmoides genitalium) protein is Probable tRNA sulfurtransferase.